A 598-amino-acid polypeptide reads, in one-letter code: NADH-quinone oxidoreductase subunit C/D (598 aa).

The segment at Met-1–Glu-189 is NADH dehydrogenase I subunit C. The interval Asp-213–Arg-598 is NADH dehydrogenase I subunit D.

In the N-terminal section; belongs to the complex I 30 kDa subunit family. It in the C-terminal section; belongs to the complex I 49 kDa subunit family. NDH-1 is composed of 13 different subunits. Subunits NuoB, CD, E, F, and G constitute the peripheral sector of the complex.

It is found in the cell inner membrane. The catalysed reaction is a quinone + NADH + 5 H(+)(in) = a quinol + NAD(+) + 4 H(+)(out). Functionally, NDH-1 shuttles electrons from NADH, via FMN and iron-sulfur (Fe-S) centers, to quinones in the respiratory chain. The immediate electron acceptor for the enzyme in this species is believed to be ubiquinone. Couples the redox reaction to proton translocation (for every two electrons transferred, four hydrogen ions are translocated across the cytoplasmic membrane), and thus conserves the redox energy in a proton gradient. The protein is NADH-quinone oxidoreductase subunit C/D of Yersinia pestis bv. Antiqua (strain Angola).